Here is a 593-residue protein sequence, read N- to C-terminus: V-type sodium ATPase catalytic subunit A (593 aa).

Position 232–239 (232–239) interacts with ATP; the sequence is GPFGAGKT.

The protein belongs to the ATPase alpha/beta chains family.

It carries out the reaction 4 Na(+)(in) + ATP + H2O = 4 Na(+)(out) + ADP + phosphate + H(+). Involved in ATP-driven sodium extrusion. The sequence is that of V-type sodium ATPase catalytic subunit A (ntpA) from Enterococcus hirae (strain ATCC 9790 / DSM 20160 / JCM 8729 / LMG 6399 / NBRC 3181 / NCIMB 6459 / NCDO 1258 / NCTC 12367 / WDCM 00089 / R).